The primary structure comprises 600 residues: MKISNSERRLRQPIVVVLGHVDHGKTTLLDKIRGTTVVKKEPGEMTQEVGASFVPSYIIEKLAEPLKKVIPIKLQIPGLLFIDTPGHEYFSNLRRRGGSVADIAILVVDITEGLQKQSIESIQILRERKVPFLIAANKIDKIPGWKSNNDIPFLASIEKQRNDVKVYLDNLVYNLVSQLANLGFSSERYDRIKDFTKTVAIVPVSAKTGEGVADLLALLAGLTQRYLETRLKFAEGPAKGVILEVKEDPGLGHTIDVIIYDGVLKKNDTIILGGINGIIITKVRGIFVPRPLQDMKLSKYDLTPIDEVYAAAGVKISAPNLEEALAGSPIYVVEDESKVERYKQQIEEEIKEVRLYSDIDGIILKADSLGTLEALVSALQREGIPIRLADIGPISKRDVIEASIVAQRSKEYGIIAAFRVKLLQGIDTSGIKILYNEIIYQLIEDIKKHINDVREAEKRRTFDTLILPGKIKILPGYVFRRSDPVVVGIEVIGGIIRPKYPLIKEDGRRVGEVLQIQDNKKSLERATKGMEVAISIKGNIMIGRHVNEGDVLYTDVPKEDLEILVNKYPSSITDDMREVIKEIIRIKRKEDPLYGLGLQI.

The region spanning 10–227 (LRQPIVVVLG…LLAGLTQRYL (218 aa)) is the tr-type G domain. The G1 stretch occupies residues 19–26 (GHVDHGKT). GTP is bound at residue 19 to 26 (GHVDHGKT). The interval 44–48 (EMTQE) is G2. Residues 83 to 86 (DTPG) form a G3 region. GTP-binding positions include 83–87 (DTPGH) and 137–140 (NKID). The G4 stretch occupies residues 137–140 (NKID). The G5 stretch occupies residues 205–207 (SAK).

The protein belongs to the TRAFAC class translation factor GTPase superfamily. Classic translation factor GTPase family. IF-2 subfamily.

Function in general translation initiation by promoting the binding of the formylmethionine-tRNA to ribosomes. Seems to function along with eIF-2. The polypeptide is Probable translation initiation factor IF-2 (Saccharolobus solfataricus (strain ATCC 35092 / DSM 1617 / JCM 11322 / P2) (Sulfolobus solfataricus)).